We begin with the raw amino-acid sequence, 464 residues long: Soluble pyridine nucleotide transhydrogenase (464 aa).

FAD is bound at residue 35 to 44 (DSRRQVGGNC).

This sequence belongs to the class-I pyridine nucleotide-disulfide oxidoreductase family. Requires FAD as cofactor.

Its subcellular location is the cytoplasm. It carries out the reaction NAD(+) + NADPH = NADH + NADP(+). In terms of biological role, conversion of NADPH, generated by peripheral catabolic pathways, to NADH, which can enter the respiratory chain for energy generation. The sequence is that of Soluble pyridine nucleotide transhydrogenase from Pseudomonas savastanoi pv. phaseolicola (strain 1448A / Race 6) (Pseudomonas syringae pv. phaseolicola (strain 1448A / Race 6)).